Consider the following 330-residue polypeptide: Ketol-acid reductoisomerase (NADP(+)) (330 aa).

A KARI N-terminal Rossmann domain is found at 2-182 (ARMYYDADAN…GGTRAGILET (181 aa)). Residues 25–28 (YGSQ), Ser51, Ser53, and 83–86 (DEFQ) each bind NADP(+). His108 is an active-site residue. Position 134 (Gly134) interacts with NADP(+). In terms of domain architecture, KARI C-terminal knotted spans 183 to 328 (SFREETETDL…KDLRAMFSWL (146 aa)). The Mg(2+) site is built by Asp191, Glu195, Glu227, and Glu231. Ser252 provides a ligand contact to substrate.

It belongs to the ketol-acid reductoisomerase family. Mg(2+) is required as a cofactor.

The catalysed reaction is (2R)-2,3-dihydroxy-3-methylbutanoate + NADP(+) = (2S)-2-acetolactate + NADPH + H(+). It catalyses the reaction (2R,3R)-2,3-dihydroxy-3-methylpentanoate + NADP(+) = (S)-2-ethyl-2-hydroxy-3-oxobutanoate + NADPH + H(+). Its pathway is amino-acid biosynthesis; L-isoleucine biosynthesis; L-isoleucine from 2-oxobutanoate: step 2/4. It participates in amino-acid biosynthesis; L-valine biosynthesis; L-valine from pyruvate: step 2/4. Its function is as follows. Involved in the biosynthesis of branched-chain amino acids (BCAA). Catalyzes an alkyl-migration followed by a ketol-acid reduction of (S)-2-acetolactate (S2AL) to yield (R)-2,3-dihydroxy-isovalerate. In the isomerase reaction, S2AL is rearranged via a Mg-dependent methyl migration to produce 3-hydroxy-3-methyl-2-ketobutyrate (HMKB). In the reductase reaction, this 2-ketoacid undergoes a metal-dependent reduction by NADPH to yield (R)-2,3-dihydroxy-isovalerate. This Synechococcus sp. (strain ATCC 27144 / PCC 6301 / SAUG 1402/1) (Anacystis nidulans) protein is Ketol-acid reductoisomerase (NADP(+)).